The chain runs to 62 residues: Large ribosomal subunit protein bL32 (62 aa).

It belongs to the bacterial ribosomal protein bL32 family.

The chain is Large ribosomal subunit protein bL32 (rpmF) from Treponema pallidum (strain Nichols).